We begin with the raw amino-acid sequence, 199 residues long: MVKVKFCGIASLEDAILAEKLGADFIGFVTDTASPRFVKKDFIGFVRRYVEIPTVEVIVKGNVSESIDKTKADLIQIHRVLTRRELDEIHMYRKKVILYVPSSDMYQEYFRSVISMGFNVLVDSEIKGSKVNLDLARGWAKEYEIGIGGGISPDNLHDFLSINPKWIDVSSGIEKYKGKKDPSKMLKIIEGVRKWKYTQ.

This sequence belongs to the TrpF family.

It carries out the reaction N-(5-phospho-beta-D-ribosyl)anthranilate = 1-(2-carboxyphenylamino)-1-deoxy-D-ribulose 5-phosphate. It participates in amino-acid biosynthesis; L-tryptophan biosynthesis; L-tryptophan from chorismate: step 3/5. The sequence is that of N-(5'-phosphoribosyl)anthranilate isomerase from Sulfolobus acidocaldarius (strain ATCC 33909 / DSM 639 / JCM 8929 / NBRC 15157 / NCIMB 11770).